Reading from the N-terminus, the 248-residue chain is Phosphatidylserine decarboxylase proenzyme (248 aa).

Ser206 acts as the Schiff-base intermediate with substrate; via pyruvic acid in catalysis. Ser206 carries the post-translational modification Pyruvic acid (Ser); by autocatalysis.

Belongs to the phosphatidylserine decarboxylase family. PSD-A subfamily. In terms of assembly, heterodimer of a large membrane-associated beta subunit and a small pyruvoyl-containing alpha subunit. It depends on pyruvate as a cofactor. Post-translationally, is synthesized initially as an inactive proenzyme. Formation of the active enzyme involves a self-maturation process in which the active site pyruvoyl group is generated from an internal serine residue via an autocatalytic post-translational modification. Two non-identical subunits are generated from the proenzyme in this reaction, and the pyruvate is formed at the N-terminus of the alpha chain, which is derived from the carboxyl end of the proenzyme. The post-translation cleavage follows an unusual pathway, termed non-hydrolytic serinolysis, in which the side chain hydroxyl group of the serine supplies its oxygen atom to form the C-terminus of the beta chain, while the remainder of the serine residue undergoes an oxidative deamination to produce ammonia and the pyruvoyl prosthetic group on the alpha chain.

Its subcellular location is the cell membrane. The enzyme catalyses a 1,2-diacyl-sn-glycero-3-phospho-L-serine + H(+) = a 1,2-diacyl-sn-glycero-3-phosphoethanolamine + CO2. It participates in phospholipid metabolism; phosphatidylethanolamine biosynthesis; phosphatidylethanolamine from CDP-diacylglycerol: step 2/2. Functionally, catalyzes the formation of phosphatidylethanolamine (PtdEtn) from phosphatidylserine (PtdSer). The protein is Phosphatidylserine decarboxylase proenzyme of Nitrobacter hamburgensis (strain DSM 10229 / NCIMB 13809 / X14).